A 795-amino-acid polypeptide reads, in one-letter code: Multiple C2 domain and transmembrane region protein 12 (795 aa).

C2 domains are found at residues 24–142 (RNPR…PQWY), 180–298 (VCAS…SAPA), and 341–463 (YSSD…TCSY). The Ca(2+) site is built by Asn-57, Asp-109, and Asn-113. The next 4 helical transmembrane spans lie at 590–610 (CTPK…EYYI), 612–632 (WLVT…VILL), 730–750 (FVLI…CLGW), and 752–772 (LHVR…LPWF).

Belongs to the MCTP family. It depends on Ca(2+) as a cofactor. As to expression, expressed in root vascular tissues and meristems. Observed in flowers.

It localises to the endoplasmic reticulum membrane. Functionally, may function as a signaling molecule by regulating the trafficking of other regulators. This is Multiple C2 domain and transmembrane region protein 12 from Arabidopsis thaliana (Mouse-ear cress).